Consider the following 70-residue polypeptide: Mu-agatoxin-Ao1b (70 aa).

The N-terminal stretch at 1-20 is a signal peptide; sequence MKAIIFFCFLSVMVFIVAEA. Positions 21-33 are excised as a propeptide; the sequence is SSLEALKIFEGER. Cystine bridges form between Cys-35–Cys-50, Cys-42–Cys-55, Cys-49–Cys-65, and Cys-57–Cys-63. Asn-69 carries the post-translational modification Asparagine amide.

It belongs to the neurotoxin 07 (Beta/delta-agtx) family. 04 (aga-5) subfamily. In terms of tissue distribution, expressed by the venom gland.

It is found in the secreted. In terms of biological role, insecticidal neurotoxin that modulates the insect Nav channel (DmNaV1/tipE (para/tipE)) in a unique manner, with both the activation and inactivation processes being affected. The voltage dependence of activation is shifted toward more hyperpolarized potentials (analogous to site 4 toxins) and a non-inactivating persistent sodium current is induced (site 3-like action). Interestingly, both effects take place in a voltage-dependent manner, producing a bell-shaped curve between -80 and 0 mV. The chain is Mu-agatoxin-Ao1b from Agelena orientalis (Funnel-web spider).